Consider the following 222-residue polypeptide: Putative N-acetylmannosamine-6-phosphate 2-epimerase (222 aa).

It belongs to the NanE family.

The catalysed reaction is an N-acyl-D-glucosamine 6-phosphate = an N-acyl-D-mannosamine 6-phosphate. It participates in amino-sugar metabolism; N-acetylneuraminate degradation; D-fructose 6-phosphate from N-acetylneuraminate: step 3/5. In terms of biological role, converts N-acetylmannosamine-6-phosphate (ManNAc-6-P) to N-acetylglucosamine-6-phosphate (GlcNAc-6-P). The chain is Putative N-acetylmannosamine-6-phosphate 2-epimerase from Staphylococcus aureus (strain MSSA476).